A 316-amino-acid polypeptide reads, in one-letter code: Spermidine synthase (316 aa).

A PABS domain is found at Pro-25–Thr-262. Gln-56 provides a ligand contact to S-adenosyl 3-(methylsulfanyl)propylamine. Tyr-86 provides a ligand contact to putrescine. S-adenosyl 3-(methylsulfanyl)propylamine contacts are provided by residues Gln-87, Asp-111, Glu-131, Asp-162 to Gly-163, and Asp-181. Asp-181 serves as the catalytic Proton acceptor. Putrescine-binding positions include Asp-181–Asp-184 and Tyr-250.

It belongs to the spermidine/spermine synthase family.

It carries out the reaction S-adenosyl 3-(methylsulfanyl)propylamine + putrescine = S-methyl-5'-thioadenosine + spermidine + H(+). The protein operates within amine and polyamine biosynthesis; spermidine biosynthesis; spermidine from putrescine: step 1/1. This Coffea arabica (Arabian coffee) protein is Spermidine synthase.